The sequence spans 256 residues: Ras-related protein Rab-26 (256 aa).

The disordered stretch occupies residues 1–51 (MSRKKTPKSKGASTPAASTLPTANGARPARSGTALSGPDAPPNGPLQPGRP). Residues 12-23 (ASTPAASTLPTA) show a composition bias toward low complexity. Ser72, Gly73, Val74, Gly75, Lys76, Thr77, Cys78, Ser95, and Thr96 together coordinate GTP. Thr77 is a Mg(2+) binding site. 2 short sequence motifs (switch) span residues 86-101 (GAFL…GIDF) and 119-136 (DTAG…YYRD). Mg(2+) is bound by residues Thr96 and Asp119. Gly122, Asn177, Lys178, Asp180, Ala208, and Lys209 together coordinate GTP. Residues Cys253 and Cys254 are each lipidated (S-geranylgeranyl cysteine).

The protein belongs to the small GTPase superfamily. Rab family. In terms of assembly, interacts with RIMS1. Interacts with ADRA2B. Mg(2+) serves as cofactor. As to expression, predominantly expressed in brain.

The protein resides in the golgi apparatus membrane. The protein localises to the cytoplasmic vesicle. Its subcellular location is the secretory vesicle membrane. It catalyses the reaction GTP + H2O = GDP + phosphate + H(+). Regulated by guanine nucleotide exchange factors (GEFs) which promote the exchange of bound GDP for free GTP. Regulated by GTPase activating proteins (GAPs) which increase the GTP hydrolysis activity. Inhibited by GDP dissociation inhibitors (GDIs). Functionally, the small GTPases Rab are key regulators of intracellular membrane trafficking, from the formation of transport vesicles to their fusion with membranes. Rabs cycle between an inactive GDP-bound form and an active GTP-bound form that is able to recruit to membranes different set of downstream effectors directly responsible for vesicle formation, movement, tethering and fusion. RAB26 mediates transport of ADRA2A and ADRA2B from the Golgi to the cell membrane. Plays a role in the maturation of zymogenic granules and in pepsinogen secretion in the stomach. Plays a role in the secretion of amylase from acinar granules in the parotid gland. This is Ras-related protein Rab-26 from Homo sapiens (Human).